Consider the following 174-residue polypeptide: Ribosome maturation factor RimP (174 aa).

It belongs to the RimP family.

It localises to the cytoplasm. Its function is as follows. Required for maturation of 30S ribosomal subunits. This chain is Ribosome maturation factor RimP, found in Acinetobacter baumannii (strain SDF).